Reading from the N-terminus, the 153-residue chain is Ribosome maturation factor RimP (153 aa).

Belongs to the RimP family.

Its subcellular location is the cytoplasm. Its function is as follows. Required for maturation of 30S ribosomal subunits. This is Ribosome maturation factor RimP from Synechococcus elongatus (strain ATCC 33912 / PCC 7942 / FACHB-805) (Anacystis nidulans R2).